The chain runs to 145 residues: uncharacterized protein (145 aa).

Ser67 carries the phosphoserine modification.

As to expression, expressed in retina and retinoblastoma.

This is an uncharacterized protein from Homo sapiens (Human).